A 393-amino-acid polypeptide reads, in one-letter code: tRNA(Met) cytidine acetate ligase (393 aa).

Gly-81, Asn-142, and Arg-167 together coordinate ATP.

This sequence belongs to the TmcAL family.

The protein resides in the cytoplasm. It catalyses the reaction cytidine(34) in elongator tRNA(Met) + acetate + ATP = N(4)-acetylcytidine(34) in elongator tRNA(Met) + AMP + diphosphate. Catalyzes the formation of N(4)-acetylcytidine (ac(4)C) at the wobble position of elongator tRNA(Met), using acetate and ATP as substrates. First activates an acetate ion to form acetyladenylate (Ac-AMP) and then transfers the acetyl group to tRNA to form ac(4)C34. This is tRNA(Met) cytidine acetate ligase from Bacillus mycoides (strain KBAB4) (Bacillus weihenstephanensis).